Reading from the N-terminus, the 200-residue chain is Imidazoleglycerol-phosphate dehydratase (200 aa).

It belongs to the imidazoleglycerol-phosphate dehydratase family.

It localises to the cytoplasm. It carries out the reaction D-erythro-1-(imidazol-4-yl)glycerol 3-phosphate = 3-(imidazol-4-yl)-2-oxopropyl phosphate + H2O. It functions in the pathway amino-acid biosynthesis; L-histidine biosynthesis; L-histidine from 5-phospho-alpha-D-ribose 1-diphosphate: step 6/9. The chain is Imidazoleglycerol-phosphate dehydratase from Bifidobacterium animalis subsp. lactis (strain AD011).